A 622-amino-acid chain; its full sequence is Low affinity potassium transport system protein Kup (622 aa).

Transmembrane regions (helical) follow at residues 9 to 29 (LPAV…TSPL), 52 to 72 (FLSL…LLFV), 99 to 119 (TPVL…EVVI), 137 to 157 (PSLQ…LFFI), 165 to 185 (VGKL…VLGV), 213 to 233 (VSFF…ALYA), 247 to 267 (WFSA…ALLL), 276 to 296 (PFFL…ATLA), 337 to 357 (IYIP…IVSF), 363 to 383 (LAAA…ILSC), 394 to 414 (LLIV…MFAA), and 419 to 439 (IFSG…AMIT).

It belongs to the HAK/KUP transporter (TC 2.A.72) family.

It is found in the cell inner membrane. The enzyme catalyses K(+)(in) + H(+)(in) = K(+)(out) + H(+)(out). Responsible for the low-affinity transport of potassium into the cell. Likely operates as a K(+):H(+) symporter. The sequence is that of Low affinity potassium transport system protein Kup from Sodalis glossinidius (strain morsitans).